Consider the following 122-residue polypeptide: Small ribosomal subunit protein bS16 (122 aa).

The interval 87–122 (VGKAKQAEARKAGAKNVAKQAAEAKAEETPADNTEA) is disordered.

The protein belongs to the bacterial ribosomal protein bS16 family.

The chain is Small ribosomal subunit protein bS16 from Prochlorococcus marinus (strain MIT 9303).